A 343-amino-acid chain; its full sequence is LRP2-binding protein (343 aa).

A TPR repeat occupies 58–91 (SQATFLLGQLHYVQGCYAEAELIFDRIKDKDPQA). Sel1-like repeat units follow at residues 92–124 (LYQL…FWDS), 132–167 (YAAL…DNGN), 172–205 (VKAQ…GNGS), 206–241 (LESQ…ERGS), 242–273 (VYAQ…EYKD), and 293–328 (AIGM…RIDP).

The protein localises to the cytoplasm. Its function is as follows. May act as an adapter that regulates LRP2 function. This chain is LRP2-binding protein (lrp2bp), found in Danio rerio (Zebrafish).